The chain runs to 445 residues: Reticulon-4 receptor-like 1 (445 aa).

The first 24 residues, 1–24 (MLRKGCCVELLLLLLAGELPLSGG), serve as a signal peptide directing secretion. One can recognise an LRRNT domain in the interval 25–54 (CPRDCVCYPSPMTVSCQAHNFAAIPEGIPE). LRR repeat units lie at residues 55 to 76 (DSER…HFSP), 77 to 98 (AMVT…TFEG), 101 to 123 (HLEE…TFQG), 126 to 147 (KLHA…IFGG), 150 to 171 (SLQY…IFVD), 174 to 195 (NLSH…IFRG), 198 to 219 (NLDR…AFHD), and 222 to 243 (RLTT…CLAP). In terms of domain architecture, LRRCT spans 255 to 306 (NAWDCGCRARSLWEWLRRFRGSSSVVPCATPELRQGQDLKSLRVEDFRNCTG). 2 disordered regions span residues 304-380 (CTGP…ELPE) and 401-421 (RPKR…SGVQ). Basic residues-rich tracts occupy residues 352–366 (GSKK…HRNR) and 401–413 (RPKR…RRTP). S424 carries GPI-anchor amidated serine lipidation. A helical membrane pass occupies residues 424-444 (SSGTALGVSLLAWILGLVVSL). Residues 425 to 445 (SGTALGVSLLAWILGLVVSLR) constitute a propeptide, removed in mature form.

It belongs to the Nogo receptor family. As to quaternary structure, identified in a complex that contains RTN4R, RTN4RL1 and NGFR; the interaction depends on the presence of chondroitin sulfate proteoglycans. Does not interact with MAG, OMG and RTN4. As to expression, detected in brain (at protein level). Expressed in various regions of the brain, including the cerebral cortex, hippocampus, striatum, thalamus and cerebellum.

Its subcellular location is the cell membrane. The protein resides in the membrane raft. It localises to the perikaryon. The protein localises to the cell projection. Functionally, cell surface receptor. Plays a functionally redundant role in postnatal brain development and in regulating axon regeneration in the adult central nervous system. Contributes to normal axon migration across the brain midline and normal formation of the corpus callosum. Protects motoneurons against apoptosis; protection against apoptosis is probably mediated by MAG. Plays a role in inhibiting neurite outgrowth and axon regeneration via its binding to neuronal chondroitin sulfate proteoglycans. Binds heparin. Like other family members, plays a role in restricting the number dendritic spines and the number of synapses that are formed during brain development. Signaling mediates activation of Rho and downstream reorganization of the actin cytoskeleton. The chain is Reticulon-4 receptor-like 1 from Rattus norvegicus (Rat).